We begin with the raw amino-acid sequence, 311 residues long: Triacylglycerol lipase (311 aa).

Positions 1-26 (MKKKSLLPLGLAIGLASLAASPLIQA) are cleaved as a signal peptide. The AB hydrolase-1 domain occupies 35 to 280 (PIVLAHGMLG…DNYRMNHLDE (246 aa)). Substrate is bound at residue Met-42. Ser-108 acts as the Nucleophile in catalysis. His-109 is a substrate binding site. Residues Cys-209 and Cys-261 are joined by a disulfide bond. Asp-235 provides a ligand contact to Ca(2+). Residues Asp-255 and His-277 each act as charge relay system in the active site. The Ca(2+) site is built by Asp-279, Gln-283, and Leu-287.

It belongs to the AB hydrolase superfamily. Pseudomonas lipase family. As to quaternary structure, monomer. It depends on Ca(2+) as a cofactor.

The protein resides in the secreted. It carries out the reaction a triacylglycerol + H2O = a diacylglycerol + a fatty acid + H(+). Na(+) increases lipase activity. Inhibited by diethyl p-nitrophenyl phosphate and 3,4-dichloroisocoumarin (DCI). Functionally, catalyzes the hydrolysis of triacylglycerol. It also exhibits some esterase activity with p-nitrophenyl acetate and Tween 80 as substrates, however the lipase activity is approximately eight times the esterase activity. It shows a marked specificity for the 1,3-oleyl residues of triolein. This is Triacylglycerol lipase from Pseudomonas aeruginosa (strain ATCC 15692 / DSM 22644 / CIP 104116 / JCM 14847 / LMG 12228 / 1C / PRS 101 / PAO1).